Consider the following 587-residue polypeptide: Arginine--tRNA ligase (587 aa).

Residues 127–137 (PNLAKEMHVGH) carry the 'HIGH' region motif.

It belongs to the class-I aminoacyl-tRNA synthetase family. As to quaternary structure, monomer.

The protein resides in the cytoplasm. It carries out the reaction tRNA(Arg) + L-arginine + ATP = L-arginyl-tRNA(Arg) + AMP + diphosphate. This chain is Arginine--tRNA ligase, found in Pseudomonas aeruginosa (strain UCBPP-PA14).